The following is a 310-amino-acid chain: tRNA dimethylallyltransferase (310 aa).

14–21 (GPTASGKT) lines the ATP pocket. 16–21 (TASGKT) lines the substrate pocket. An interaction with substrate tRNA region spans residues 39–42 (DSMQ).

The protein belongs to the IPP transferase family. Monomer. Mg(2+) serves as cofactor.

The catalysed reaction is adenosine(37) in tRNA + dimethylallyl diphosphate = N(6)-dimethylallyladenosine(37) in tRNA + diphosphate. Functionally, catalyzes the transfer of a dimethylallyl group onto the adenine at position 37 in tRNAs that read codons beginning with uridine, leading to the formation of N6-(dimethylallyl)adenosine (i(6)A). This chain is tRNA dimethylallyltransferase, found in Corynebacterium jeikeium (strain K411).